The primary structure comprises 194 residues: ATP-dependent Clp protease proteolytic subunit (194 aa).

The active-site Nucleophile is S97. H122 is a catalytic residue.

Belongs to the peptidase S14 family. In terms of assembly, fourteen ClpP subunits assemble into 2 heptameric rings which stack back to back to give a disk-like structure with a central cavity, resembling the structure of eukaryotic proteasomes.

The protein resides in the cytoplasm. It catalyses the reaction Hydrolysis of proteins to small peptides in the presence of ATP and magnesium. alpha-casein is the usual test substrate. In the absence of ATP, only oligopeptides shorter than five residues are hydrolyzed (such as succinyl-Leu-Tyr-|-NHMec, and Leu-Tyr-Leu-|-Tyr-Trp, in which cleavage of the -Tyr-|-Leu- and -Tyr-|-Trp bonds also occurs).. Functionally, cleaves peptides in various proteins in a process that requires ATP hydrolysis. Has a chymotrypsin-like activity. Plays a major role in the degradation of misfolded proteins. The polypeptide is ATP-dependent Clp protease proteolytic subunit (Lactobacillus delbrueckii subsp. bulgaricus (strain ATCC BAA-365 / Lb-18)).